Here is a 71-residue protein sequence, read N- to C-terminus: Small ribosomal subunit protein bS21 (71 aa).

The protein belongs to the bacterial ribosomal protein bS21 family.

The chain is Small ribosomal subunit protein bS21 from Shewanella sediminis (strain HAW-EB3).